The sequence spans 335 residues: Basic endochitinase B (335 aa).

The signal sequence occupies residues 1-33 (MPPQKENHRTLNKMKTNLFLFLIFSLLLSLSSA). The region spanning 34–75 (EQCGRQAGGALCPNGLCCSEFGWCGNTEPYCKQPGCQSQCTP) is the Chitin-binding type-1 domain. 7 disulfides stabilise this stretch: Cys-36–Cys-51, Cys-45–Cys-57, Cys-50–Cys-64, Cys-69–Cys-73, Cys-107–Cys-169, Cys-181–Cys-189, and Cys-288–Cys-320. The Proton donor role is filled by Glu-151. The propeptide at 329-335 (GLLEAAI) is removed in mature form. A Vacuolar targeting signal motif is present at residues 329 to 335 (GLLEAAI).

This sequence belongs to the glycosyl hydrolase 19 family. Chitinase class I subfamily. High constitutive level in roots with lower levels in leaves and flowering shoots.

The protein localises to the vacuole. The enzyme catalyses Random endo-hydrolysis of N-acetyl-beta-D-glucosaminide (1-&gt;4)-beta-linkages in chitin and chitodextrins.. Its function is as follows. Defense against chitin-containing fungal pathogens. Seems particularly implicated in resistance to jasmonate-inducing pathogens such as A.brassicicola. In vitro antifungal activity against T.reesei, but not against A.solani, F.oxysporum, S.sclerotiorum, G.graminis and P.megasperma. This chain is Basic endochitinase B (CHI-B), found in Arabidopsis thaliana (Mouse-ear cress).